A 386-amino-acid chain; its full sequence is Galactokinase (386 aa).

A substrate-binding site is contributed by 35-38 (EHTD). ATP-binding positions include Ser69 and 125-131 (GAGLSSS). Mg(2+) is bound by residues Ser131 and Glu163. The active-site Proton acceptor is Asp175. Tyr224 lines the substrate pocket.

It belongs to the GHMP kinase family. GalK subfamily.

The protein localises to the cytoplasm. The catalysed reaction is alpha-D-galactose + ATP = alpha-D-galactose 1-phosphate + ADP + H(+). It participates in carbohydrate metabolism; galactose metabolism. Functionally, catalyzes the transfer of the gamma-phosphate of ATP to D-galactose to form alpha-D-galactose-1-phosphate (Gal-1-P). The sequence is that of Galactokinase from Vibrio vulnificus (strain CMCP6).